Here is a 280-residue protein sequence, read N- to C-terminus: Four and a half LIM domains protein 1 (280 aa).

Serine 2 bears the N-acetylserine mark. Position 4 is an N6-acetyllysine (lysine 4). The C4-type zinc-finger motif lies at cysteine 7–cysteine 31. LIM zinc-binding domains lie at cysteine 40–cysteine 92, cysteine 101–cysteine 153, cysteine 162–cysteine 212, and cysteine 221–cysteine 276. Residue lysine 86 forms a Glycyl lysine isopeptide (Lys-Gly) (interchain with G-Cter in SUMO2) linkage.

In terms of tissue distribution, isoform 1 seems to be most abundant in each tissue and isoform 2 much less abundant. Isoform 1 is highly expressed in skeletal muscle and lung, and to a lesser extent in heart, brain and kidney. Isoform 2 was found in brain, lung kidney and genital organs.

It localises to the cytoplasm. The protein localises to the nucleus. In terms of biological role, may have an involvement in muscle development or hypertrophy. Isoform 2 binds to RBP-J and plays a negative regulatory role in the RBP-J-mediated transcription in mammalian systems. This chain is Four and a half LIM domains protein 1 (Fhl1), found in Mus musculus (Mouse).